Here is a 441-residue protein sequence, read N- to C-terminus: Histone-lysine N-methyltransferase set9 (441 aa).

Residues 108–221 (CKFEICSTNQ…PGEEITTFYS (114 aa)) form the SET domain.

It belongs to the class V-like SAM-binding methyltransferase superfamily. Histone-lysine methyltransferase family. Suvar4-20 subfamily.

The protein localises to the nucleus. The protein resides in the chromosome. The catalysed reaction is L-lysyl(20)-[histone H4] + 3 S-adenosyl-L-methionine = N(6),N(6),N(6)-trimethyl-L-lysyl(20)-[histone H4] + 3 S-adenosyl-L-homocysteine + 3 H(+). Its function is as follows. Histone methyltransferase that specifically trimethylates 'Lys-20' of histone H4 to form H4K20me3. H4 'Lys-20' methylation is apparently not involved in the regulation of gene expression or heterochromatin function but participates in DNA damage response by giving a 'histone mark' required for the recruitment of the checkpoint protein Crb2 to sites of DNA damage. The sequence is that of Histone-lysine N-methyltransferase set9 (set9) from Schizosaccharomyces pombe (strain 972 / ATCC 24843) (Fission yeast).